The sequence spans 237 residues: Survival of motor neuron-related-splicing factor 30 (237 aa).

The span at 52–69 (SQPAEGTTSTKSSETVAP) shows a compositional bias: polar residues. 2 disordered regions span residues 52 to 73 (SQPAEGTTSTKSSETVAPSHSW) and 149 to 198 (REYK…RSIF). The region spanning 72 to 132 (SWRVGDHCMA…KKVEEGRIRD (61 aa)) is the Tudor domain. The Nuclear localization signal signature appears at 142 to 160 (KELQAEQREYKKKKAQKKV). The span at 151-161 (YKKKKAQKKVQ) shows a compositional bias: basic residues. Residues 162-175 (RMKELEQEREDQKS) are compositionally biased toward basic and acidic residues. Residues 176 to 185 (KWQQFNNKAY) are compositionally biased toward polar residues.

The protein belongs to the SMN family. As to quaternary structure, associates with spliceosomes.

Its subcellular location is the nucleus speckle. It localises to the nucleus. It is found in the cajal body. Its function is as follows. Involved in spliceosome assembly. The chain is Survival of motor neuron-related-splicing factor 30 (smndc1) from Danio rerio (Zebrafish).